Reading from the N-terminus, the 1072-residue chain is DNA-directed RNA polymerase subunit beta (1072 aa).

It belongs to the RNA polymerase beta chain family. As to quaternary structure, in plastids the minimal PEP RNA polymerase catalytic core is composed of four subunits: alpha, beta, beta', and beta''. When a (nuclear-encoded) sigma factor is associated with the core the holoenzyme is formed, which can initiate transcription.

It is found in the plastid. The protein localises to the chloroplast. It catalyses the reaction RNA(n) + a ribonucleoside 5'-triphosphate = RNA(n+1) + diphosphate. Functionally, DNA-dependent RNA polymerase catalyzes the transcription of DNA into RNA using the four ribonucleoside triphosphates as substrates. This chain is DNA-directed RNA polymerase subunit beta, found in Olimarabidopsis pumila (Dwarf rocket).